We begin with the raw amino-acid sequence, 177 residues long: MRVILLLLTLDVLGVSSMMTDKNLKKKIEGNWRTVYLAASSVEKINEGSPLRTYFRRIECGKRCNRINLYFYIKKGAKCQQFKIVGRRSQDVYYAKYEGSTAFMLKTVNEKILLFDYFNRNRRNDVTRVAGVLAKGRQLTKDEMTEYMNFVEEMGIEDENVQRVMDTDTCPNKIRIR.

Residues 1 to 17 (MRVILLLLTLDVLGVSS) form the signal peptide. The cysteines at positions 79 and 170 are disulfide-linked.

This sequence belongs to the calycin superfamily. Lipocalin family. As to expression, prostatic epithelial cells.

The protein localises to the nucleus. It localises to the secreted. The polypeptide is Probasin (Pbsn) (Rattus norvegicus (Rat)).